The chain runs to 476 residues: Calcitonin gene-related peptide type 1 receptor (476 aa).

Residues 1-33 (METLQMGLLSRSALFKYIIIFLIMINTRGYVLA) form the signal peptide. The Extracellular portion of the chain corresponds to 34 to 154 (SQEQEAKTSV…FTHEKVKTAL (121 aa)). Disulfide bonds link Cys63–Cys89, Cys80–Cys120, and Cys103–Cys142. Residues Asn81, Asn133, and Asn138 are each glycosylated (N-linked (GlcNAc...) asparagine). The helical transmembrane segment at 155-179 (NLYYLTIIGHGLSIASLLISLGIFF) threads the bilayer. The Cytoplasmic portion of the chain corresponds to 180–190 (YFKNLSCQRIT). Residues 191–213 (LHKNLFFSFVCNSIITIISLSAV) form a helical membrane-spanning segment. Topologically, residues 214 to 224 (ANNQALVATNP) are extracellular. Residues 225-253 (VICKISQFIHLYLMGCNYFWMLCEGIYLH) form a helical membrane-spanning segment. Residues 254-267 (TLIVVAVFAEKQHL) are Cytoplasmic-facing. Residues 268 to 288 (MWYYLLGWGFPLIPACIHAVA) form a helical membrane-spanning segment. Residues 289-304 (RSLYYNDNCWISSETH) lie on the Extracellular side of the membrane. The chain crosses the membrane as a helical span at residues 305 to 329 (LLYIIHGPICAALLVNLFFLLNIVR). Over 330–344 (VLITKLKVTHQAESN) the chain is Cytoplasmic. Residues 345–366 (LYMKAVRATLILVPLLGIEFVL) traverse the membrane as a helical segment. Residues 367-381 (FPWKPEGRIAEEIYD) are Extracellular-facing. The helical transmembrane segment at 382 to 402 (YVMHILMHYQGLLVATIFCFF) threads the bilayer. Over 403–476 (NGEVQAVLKR…VFFKTEKQYM (74 aa)) the chain is Cytoplasmic.

The protein belongs to the G-protein coupled receptor 2 family.

It localises to the cell membrane. In terms of biological role, may function as G protein-coupled receptor for calcitonin-gene-related peptides and adrenomedullin. Specificity may be modulated by accessory proteins. May activate cAMP-dependent pathway. In Xenopus laevis (African clawed frog), this protein is Calcitonin gene-related peptide type 1 receptor (calcrl).